Here is a 1814-residue protein sequence, read N- to C-terminus: U3 small nucleolar RNA-associated protein 10 (1814 aa).

One copy of the HEAT 1 repeat lies at 583–620 (LDFQALLPFLLVALTDASERVRREAAAALAAVGSLYKK). A run of 2 helical transmembrane segments spans residues 942-962 (IQSG…AIVN) and 998-1018 (ALLL…HSVM). HEAT repeat units lie at residues 1042–1079 (QTID…AFEH), 1249–1286 (LTLV…QNPE), 1293–1331 (IRVL…KYGK), and 1770–1807 (ALLP…VLGE).

This sequence belongs to the HEATR1/UTP10 family. In terms of assembly, component of the ribosomal small subunit (SSU) processome.

It localises to the nucleus. The protein localises to the nucleolus. Its subcellular location is the membrane. In terms of biological role, involved in nucleolar processing of pre-18S ribosomal RNA. Involved in ribosome biosynthesis. This Neosartorya fischeri (strain ATCC 1020 / DSM 3700 / CBS 544.65 / FGSC A1164 / JCM 1740 / NRRL 181 / WB 181) (Aspergillus fischerianus) protein is U3 small nucleolar RNA-associated protein 10.